The following is a 206-amino-acid chain: LexA repressor (206 aa).

The segment at residues R28–K48 is a DNA-binding region (H-T-H motif). Catalysis depends on for autocatalytic cleavage activity residues S123 and K160.

It belongs to the peptidase S24 family. In terms of assembly, homodimer.

The enzyme catalyses Hydrolysis of Ala-|-Gly bond in repressor LexA.. Functionally, represses a number of genes involved in the response to DNA damage (SOS response), including recA and lexA. In the presence of single-stranded DNA, RecA interacts with LexA causing an autocatalytic cleavage which disrupts the DNA-binding part of LexA, leading to derepression of the SOS regulon and eventually DNA repair. This chain is LexA repressor, found in Shewanella piezotolerans (strain WP3 / JCM 13877).